A 160-amino-acid chain; its full sequence is Serine-protein kinase RsbW (160 aa).

Belongs to the anti-sigma-factor family.

It catalyses the reaction L-seryl-[protein] + ATP = O-phospho-L-seryl-[protein] + ADP + H(+). It carries out the reaction L-threonyl-[protein] + ATP = O-phospho-L-threonyl-[protein] + ADP + H(+). Its function is as follows. Negative regulator of sigma-B activity. Phosphorylates and inactivates its specific antagonist protein, RsbV. Upon phosphorylation of RsbV, RsbW is released and binds to sigma-B, thereby blocking its ability to form an RNA polymerase holoenzyme (E-sigma-B). In Bacillus cereus (strain ATCC 10987 / NRS 248), this protein is Serine-protein kinase RsbW.